The chain runs to 146 residues: UPF0260 protein Swoo_2117 (146 aa).

This sequence belongs to the UPF0260 family.

This chain is UPF0260 protein Swoo_2117, found in Shewanella woodyi (strain ATCC 51908 / MS32).